The primary structure comprises 331 residues: uncharacterized protein (331 aa).

WD repeat units lie at residues 53–92 (KAHT…KSAV), 97–139 (QQST…KLIR), 144–184 (AHND…DSTD), and 300–331 (ASEE…AFRV).

The protein localises to the cytoplasm. It localises to the nucleus. This is an uncharacterized protein from Schizosaccharomyces pombe (strain 972 / ATCC 24843) (Fission yeast).